We begin with the raw amino-acid sequence, 314 residues long: Lipoyl synthase (314 aa).

Positions 61, 66, 72, 87, 91, 94, and 301 each coordinate [4Fe-4S] cluster. A Radical SAM core domain is found at 73–290; that stretch reads FGRGTATFMI…EEEAKKMGFS (218 aa).

It belongs to the radical SAM superfamily. Lipoyl synthase family. [4Fe-4S] cluster is required as a cofactor.

It localises to the cytoplasm. The enzyme catalyses [[Fe-S] cluster scaffold protein carrying a second [4Fe-4S](2+) cluster] + N(6)-octanoyl-L-lysyl-[protein] + 2 oxidized [2Fe-2S]-[ferredoxin] + 2 S-adenosyl-L-methionine + 4 H(+) = [[Fe-S] cluster scaffold protein] + N(6)-[(R)-dihydrolipoyl]-L-lysyl-[protein] + 4 Fe(3+) + 2 hydrogen sulfide + 2 5'-deoxyadenosine + 2 L-methionine + 2 reduced [2Fe-2S]-[ferredoxin]. Its pathway is protein modification; protein lipoylation via endogenous pathway; protein N(6)-(lipoyl)lysine from octanoyl-[acyl-carrier-protein]: step 2/2. Catalyzes the radical-mediated insertion of two sulfur atoms into the C-6 and C-8 positions of the octanoyl moiety bound to the lipoyl domains of lipoate-dependent enzymes, thereby converting the octanoylated domains into lipoylated derivatives. The polypeptide is Lipoyl synthase (Dechloromonas aromatica (strain RCB)).